The chain runs to 182 residues: Probable nicotinate-nucleotide adenylyltransferase (182 aa).

It belongs to the NadD family.

It catalyses the reaction nicotinate beta-D-ribonucleotide + ATP + H(+) = deamido-NAD(+) + diphosphate. The protein operates within cofactor biosynthesis; NAD(+) biosynthesis; deamido-NAD(+) from nicotinate D-ribonucleotide: step 1/1. Its function is as follows. Catalyzes the reversible adenylation of nicotinate mononucleotide (NaMN) to nicotinic acid adenine dinucleotide (NaAD). This Sulfurimonas denitrificans (strain ATCC 33889 / DSM 1251) (Thiomicrospira denitrificans (strain ATCC 33889 / DSM 1251)) protein is Probable nicotinate-nucleotide adenylyltransferase.